Consider the following 134-residue polypeptide: Profilin-3 (134 aa).

A disulfide bond links Cys-13 and Cys-118. Positions 84–100 match the Involved in PIP2 interaction motif; the sequence is AVIRGKKGSGGITIKKT. Position 114 is a phosphothreonine (Thr-114).

This sequence belongs to the profilin family. In terms of assembly, occurs in many kinds of cells as a complex with monomeric actin in a 1:1 ratio. In terms of processing, phosphorylated by MAP kinases.

The protein resides in the cytoplasm. Its subcellular location is the cytoskeleton. Functionally, binds to actin and affects the structure of the cytoskeleton. At high concentrations, profilin prevents the polymerization of actin, whereas it enhances it at low concentrations. This Olea europaea (Common olive) protein is Profilin-3.